The chain runs to 300 residues: NAD kinase (300 aa).

Residue D80 is the Proton acceptor of the active site. Residues 80–81, 154–155, R165, R182, D184, 195–200, and Q253 each bind NAD(+); these read DG, ND, and TAYALS.

Belongs to the NAD kinase family. The cofactor is a divalent metal cation.

It localises to the cytoplasm. The enzyme catalyses NAD(+) + ATP = ADP + NADP(+) + H(+). In terms of biological role, involved in the regulation of the intracellular balance of NAD and NADP, and is a key enzyme in the biosynthesis of NADP. Catalyzes specifically the phosphorylation on 2'-hydroxyl of the adenosine moiety of NAD to yield NADP. This chain is NAD kinase, found in Aromatoleum aromaticum (strain DSM 19018 / LMG 30748 / EbN1) (Azoarcus sp. (strain EbN1)).